The following is a 98-amino-acid chain: Putative pterin-4-alpha-carbinolamine dehydratase (98 aa).

Belongs to the pterin-4-alpha-carbinolamine dehydratase family.

The enzyme catalyses (4aS,6R)-4a-hydroxy-L-erythro-5,6,7,8-tetrahydrobiopterin = (6R)-L-erythro-6,7-dihydrobiopterin + H2O. This Parasynechococcus marenigrum (strain WH8102) protein is Putative pterin-4-alpha-carbinolamine dehydratase.